The chain runs to 103 residues: Small ribosomal subunit protein uS10 (103 aa).

This sequence belongs to the universal ribosomal protein uS10 family. In terms of assembly, part of the 30S ribosomal subunit.

In terms of biological role, involved in the binding of tRNA to the ribosomes. The protein is Small ribosomal subunit protein uS10 of Actinobacillus pleuropneumoniae serotype 5b (strain L20).